A 473-amino-acid chain; its full sequence is M-phase inducer phosphatase 3 (473 aa).

Residues 1–23 (MSTELFSSTREEGSSGSGPSFRS) form a disordered region. Ser2 is modified (N-acetylserine). Phosphoserine is present on residues Ser20 and Ser38. At Thr48 the chain carries Phosphothreonine. Residues Ser57, Ser61, and Ser64 each carry the phosphoserine modification. Residue Thr67 is modified to Phosphothreonine. Ser122 carries the post-translational modification Phosphoserine; by CDK1. Ser129 carries the post-translational modification Phosphoserine. Thr130 is subject to Phosphothreonine. Residues 132–158 (NGLDRGHRKRDAMCSSSANKENDNGNL) form a disordered region. A compositionally biased stretch (polar residues) spans 145–158 (CSSSANKENDNGNL). Ser168 is modified (phosphoserine). Phosphoserine; by PLK3 occurs at positions 191 and 198. At Ser214 the chain carries Phosphoserine; by CDK1. Ser216 carries the phosphoserine; by CHEK1, CHEK2, BRSK1, MAPK14 AND MARK3 modification. The Rhodanese domain maps to 321 to 428 (LIEKFYVIDC…FFPEYMELCE (108 aa)). The tract at residues 334 to 379 (YEYLGGHIQGALNLYSQEELFNFFLKKPIVPLDTQKRIIIVFHCEF) is HIV-1 Vpr binding site. The active site involves Cys377. Ser472 carries the post-translational modification Phosphoserine.

The protein belongs to the MPI phosphatase family. As to quaternary structure, interacts with MAPK14 and 14-3-3 proteins. When phosphorylated on Ser-129 and/or Thr-130, interacts with PLK1. Interacts with MARK3/C-TAK1. (Microbial infection) Interacts with HIV-1 Vpr; this interaction inactivates CDC25C phosphatase activity. Phosphorylated by CHEK1 and MAPK14 at Ser-216. This phosphorylation creates a binding site for 14-3-3 protein and inhibits the phosphatase. Phosphorylated by PLK4. Phosphorylated by PLK1, leading to activate the phosphatase activity. Phosphorylation by PLK3 at Ser-191 promotes nuclear translocation. Ser-198 is a minor phosphorylation site. Was initially reported to be phosphorylated by PLK3 at Ser-216. However, such phosphorylation by PLK3 was not confirmed by other groups. Phosphorylation at Thr-48, Thr-67, Ser-122, Thr-130, Ser-168 and Ser-214 occurs at G2 and G2-M transition and is probably catalyzed by CDK1. Ser-168 phosphorylation levels are lower than those at the other 5 CDK1 sites. Phosphorylation by CDK1 leads to increased activity.

Its subcellular location is the nucleus. It catalyses the reaction O-phospho-L-tyrosyl-[protein] + H2O = L-tyrosyl-[protein] + phosphate. Functions as a dosage-dependent inducer in mitotic control. Tyrosine protein phosphatase required for progression of the cell cycle. When phosphorylated, highly effective in activating G2 cells into prophase. Directly dephosphorylates CDK1 and activates its kinase activity. The protein is M-phase inducer phosphatase 3 (CDC25C) of Homo sapiens (Human).